Reading from the N-terminus, the 457-residue chain is Bifunctional F420 biosynthesis protein FbiB (457 aa).

The coenzyme F420:L-glutamate ligase stretch occupies residues 1 to 253; it reads MTSSDSHRSA…NGPDDLFWLG (253 aa). GTP is bound by residues 29–32, Ser-59, and Lys-64; that span reads LPEF. Asp-118 is an a divalent metal cation binding site. Asn-121 provides a ligand contact to GTP. A divalent metal cation-binding residues include Asp-159 and Thr-160. Positions 254–457 are dehydro-coenzyme F420-0 reductase; the sequence is TTEALELGRQ…VRVADLLLRK (204 aa). FMN-binding positions include 269-273 and Ala-297; that span reads RRSVR. A coenzyme F420-(gamma-Glu)n-binding site is contributed by Asp-329. FMN-binding residues include Gly-408 and Arg-445.

It in the N-terminal section; belongs to the CofE family. It depends on Mg(2+) as a cofactor. Requires Mn(2+) as cofactor. The cofactor is K(+).

The enzyme catalyses oxidized coenzyme F420-0 + GTP + L-glutamate = oxidized coenzyme F420-1 + GDP + phosphate + H(+). It carries out the reaction oxidized coenzyme F420-1 + GTP + L-glutamate = oxidized coenzyme F420-2 + GDP + phosphate + H(+). It catalyses the reaction oxidized coenzyme F420-(gamma-L-Glu)(n) + GTP + L-glutamate = oxidized coenzyme F420-(gamma-L-Glu)(n+1) + GDP + phosphate + H(+). The catalysed reaction is oxidized coenzyme F420-0 + FMN + H(+) = dehydro coenzyme F420-0 + FMNH2. Its pathway is cofactor biosynthesis; coenzyme F420 biosynthesis. Bifunctional enzyme that catalyzes the GTP-dependent successive addition of multiple gamma-linked L-glutamates to the L-lactyl phosphodiester of 7,8-didemethyl-8-hydroxy-5-deazariboflavin (F420-0) to form polyglutamated F420 derivatives, and the FMNH2-dependent reduction of dehydro-F420-0 to form F420-0. The polypeptide is Bifunctional F420 biosynthesis protein FbiB (Mycobacterium leprae (strain TN)).